The chain runs to 175 residues: Bcl-2-related protein A1 (175 aa).

The protein belongs to the Bcl-2 family. Interacts directly with BCL2L11/BIM, BAK1, BID, BMF and BBC3. Interacts directly with PMAIP1. Interacts with BOP. Interacts with ING4. Interacts with UBQLN4.

The protein resides in the cytoplasm. In terms of biological role, retards apoptosis induced by IL-3 deprivation. May function in the response of hemopoietic cells to external signals and in maintaining endothelial survival during infection. Can inhibit apoptosis induced by serum starvation in the mammary epithelial cell line HC11. In Bos taurus (Bovine), this protein is Bcl-2-related protein A1 (BCL2A1).